We begin with the raw amino-acid sequence, 323 residues long: o-succinylbenzoate synthase (323 aa).

The active-site Proton donor is lysine 134. 3 residues coordinate Mg(2+): aspartate 162, glutamate 191, and aspartate 214. Lysine 236 acts as the Proton acceptor in catalysis.

Belongs to the mandelate racemase/muconate lactonizing enzyme family. MenC type 1 subfamily. It depends on a divalent metal cation as a cofactor.

It catalyses the reaction (1R,6R)-6-hydroxy-2-succinyl-cyclohexa-2,4-diene-1-carboxylate = 2-succinylbenzoate + H2O. Its pathway is quinol/quinone metabolism; 1,4-dihydroxy-2-naphthoate biosynthesis; 1,4-dihydroxy-2-naphthoate from chorismate: step 4/7. The protein operates within quinol/quinone metabolism; menaquinone biosynthesis. Converts 2-succinyl-6-hydroxy-2,4-cyclohexadiene-1-carboxylate (SHCHC) to 2-succinylbenzoate (OSB). This Proteus mirabilis (strain HI4320) protein is o-succinylbenzoate synthase.